Consider the following 148-residue polypeptide: uncharacterized protein (148 aa).

Residues 65 to 79 are compositionally biased toward low complexity; sequence VDSTPSVDSTGSTSD. Positions 65–85 are disordered; sequence VDSTPSVDSTGSTSDVVDDRG.

This is an uncharacterized protein from Saccharomyces cerevisiae (strain ATCC 204508 / S288c) (Baker's yeast).